The primary structure comprises 326 residues: UDP-N-acetylglucosamine transporter (326 aa).

The next 8 helical transmembrane spans lie at 8-24 (LSLGILVFQTTSLVLTM), 42-58 (AVVVAELLKIMACILLV), 138-154 (VYQWLSLVILMTGVAFV), 174-190 (FVGLMAVLTACFSSGFA), 210-226 (IQLGFFGSIFGLMGVYI), 247-263 (IVVILQALGGLVIAAVI), 269-285 (ILKGFATSLSIILSTLI), and 296-312 (TSVFFLGAILVITATFL).

It belongs to the nucleotide-sugar transporter family. SLC35A subfamily. Interacts with SLC35A2; the interaction is reduced in the presence of SLC35A4. Found in a complex with SLC35A2 and SLC35A4.

The protein resides in the golgi apparatus membrane. In terms of biological role, uridine diphosphate-N-acetylglucosamine (UDP-GlcNAc) transporter in the Golgi apparatus. May supply UDP-GlcNAc as substrate for Golgi-resident glycosyltransferases that generate branching of diantennary oligosaccharides. The sequence is that of UDP-N-acetylglucosamine transporter (SLC35A3) from Canis lupus familiaris (Dog).